The chain runs to 830 residues: Post-transcriptional regulator MKT1 (830 aa).

Lys-4 is covalently cross-linked (Glycyl lysine isopeptide (Lys-Gly) (interchain with G-Cter in ubiquitin)). The tract at residues Arg-130–Ala-380 is interaction with PBP1. The segment at Asp-347–Ile-400 is disordered. A phosphoserine mark is found at Ser-358, Ser-362, and Ser-371. The span at Ser-361–Ala-373 shows a compositional bias: low complexity. Positions Ala-380–Ile-400 are enriched in basic and acidic residues.

This sequence belongs to the XPG/RAD2 endonuclease family. Interacts (via C-terminus) with PBP1 (via C-terminus).

Its subcellular location is the cytoplasm. It is found in the cytosol. In terms of biological role, involved in 3'-UTR mediated RNA regulation. Binds to RNA-binding and RNA regulatory proteins. Complexes with PAB1-binding protein to promote mRNA interactions with poly(A)-binding protein. Promotes mating-type switching in mother cells by positively regulating HO expression. In Saccharomyces cerevisiae (strain ATCC 204508 / S288c) (Baker's yeast), this protein is Post-transcriptional regulator MKT1 (MKT1).